Reading from the N-terminus, the 89-residue chain is Cornifin (89 aa).

Residues 1–29 are disordered; it reads MSSQQQKQPCTPPPQLQQQQVKQPCQPPP. Residue S2 is modified to N-acetylserine. A run of 8 repeats spans residues 3–14, 18–29, 31–38, 39–46, 47–54, 55–62, 63–70, and 71–78. The interval 3–29 is 2 X 12 AA approximate repeats; sequence SQQQKQPCTPPPQLQQQQVKQPCQPPP. Residues 31 to 78 form a 6 X 8 AA approximate tandem repeats region; sequence EPCIPKTKEPCLPKVPEPCHPKVPEPCQPKVPEPCHPKVPEPCPSTVT. The disordered stretch occupies residues 68-89; that stretch reads KVPEPCPSTVTPAPAQQKTKQK. Residues 75 to 89 show a composition bias toward polar residues; sequence STVTPAPAQQKTKQK.

The protein belongs to the cornifin (SPRR) family.

Its subcellular location is the cytoplasm. Its function is as follows. Cross-linked envelope protein of keratinocytes. It is a keratinocyte protein that first appears in the cell cytosol, but ultimately becomes cross-linked to membrane proteins by transglutaminase. All that results in the formation of an insoluble envelope beneath the plasma membrane. In Macaca mulatta (Rhesus macaque), this protein is Cornifin (SPRR1).